The sequence spans 278 residues: Asnovolin E/Chermesin D methyltransferase nvfJ (278 aa).

S-adenosyl-L-methionine contacts are provided by residues 125-126 (DL), 152-153 (NI), and 153-154 (IL).

The protein belongs to the class I-like SAM-binding methyltransferase superfamily. Homodimer.

The enzyme catalyses chermesin D + S-adenosyl-L-methionine = chermesin D methyl ester + S-adenosyl-L-homocysteine. The catalysed reaction is asnovolin I + S-adenosyl-L-methionine = asnovolin K + S-adenosyl-L-homocysteine. It participates in secondary metabolite biosynthesis; terpenoid biosynthesis. In terms of biological role, methyltransferase; part of the gene cluster that mediates the biosynthesis of novofumigatonin, a heavily oxygenated meroterpenoid containing a unique orthoester moiety. The first step of the pathway is the synthesis of 3,5-dimethylorsellinic acid (DMOA) by the polyketide synthase nvfA via condensation of one acetyl-CoA starter unit with 3 malonyl-CoA units and 2 methylations. DMOA is then converted to farnesyl-DMOA by the farnesyltransferase nvfB. Epoxydation by FAD-dependent monooxygenase nvfK, followed by a protonation-initiated cyclization catalyzed by the terpene cyclase nvfL leads to the production of asnavolin H. The short chain dehydrogenase nvfC then as a 3-OH dehydrogenase of asnovolin H to yield chemesin D. There are two branches to synthesize asnovolin A from chemesin D. In one branch, chemesin D undergoes Baeyer-Villiger oxidation by nvfH, methylation by nvfJ, and enoyl reduction by the nvfM D enoylreductase that reduces the double bond between C-5'and C-6', to form respectively asnovolin I, asnovolin K, and asnovolin A. In the other branch, the methylation precedes the Baeyer-Villiger oxidation and the enoyl reduction to yield asnovolin A via the asnovolin J intermediate. Asnovolin A is further converted to fumigatonoid A by the Fe(II)/2-oxoglutarate-dependent dioxygenase nvfI that catalyzes an endoperoxidation reaction. The alpha/beta hydrolase nvfD then acts as an epimerase that converts fumigatonoid A to its C-5' epimer, which then undergoes spontaneous or nvfD-catalyzed lactonization. The following step utilizes the ketoreductase nvfG to produce fumigatonoid B. The dioxygenase nvfE further converts fumigatonoid B into fumigatonoid C. Finally the Fe(II)/2-oxoglutarate-dependent dioxygenase nvfF catalyzes two rounds of oxidation to transform fumigatonoid C into the end product, novofumigatonin A. This is Asnovolin E/Chermesin D methyltransferase nvfJ from Aspergillus novofumigatus (strain IBT 16806).